A 338-amino-acid chain; its full sequence is Lipoate-protein ligase A (338 aa).

The BPL/LPL catalytic domain occupies 29-216 (PATQRVLFLW…AFFAHYGERV (188 aa)). ATP is bound by residues Arg71, 76–79 (GAVF), and Lys134. Lys134 is a binding site for (R)-lipoate.

It belongs to the LplA family. Monomer.

Its subcellular location is the cytoplasm. The catalysed reaction is L-lysyl-[lipoyl-carrier protein] + (R)-lipoate + ATP = N(6)-[(R)-lipoyl]-L-lysyl-[lipoyl-carrier protein] + AMP + diphosphate + H(+). The protein operates within protein modification; protein lipoylation via exogenous pathway; protein N(6)-(lipoyl)lysine from lipoate: step 1/2. Its pathway is protein modification; protein lipoylation via exogenous pathway; protein N(6)-(lipoyl)lysine from lipoate: step 2/2. Catalyzes both the ATP-dependent activation of exogenously supplied lipoate to lipoyl-AMP and the transfer of the activated lipoyl onto the lipoyl domains of lipoate-dependent enzymes. The polypeptide is Lipoate-protein ligase A (Escherichia coli O157:H7).